The primary structure comprises 311 residues: Probable manganese-dependent inorganic pyrophosphatase (311 aa).

Mn(2+) contacts are provided by H9, D13, D15, D77, H99, and D151.

This sequence belongs to the PPase class C family. Requires Mn(2+) as cofactor.

The protein localises to the cytoplasm. The catalysed reaction is diphosphate + H2O = 2 phosphate + H(+). The polypeptide is Probable manganese-dependent inorganic pyrophosphatase (Streptococcus equi subsp. zooepidemicus (strain H70)).